A 325-amino-acid polypeptide reads, in one-letter code: Sensor histidine kinase YxdK (325 aa).

Residues 1-8 (MKLFLRSH) are Cytoplasmic-facing. The chain crosses the membrane as a helical span at residues 9–29 (AVLILLFLLQGLFVFFYYWFA). Over 30 to 33 (GLHS) the chain is Extracellular. Residues 34-54 (FSHLFYILGVQLLILAGYLAY) form a helical membrane-spanning segment. Residues 55-325 (RWYKDRGVYH…SVRFSFLTKM (271 aa)) are Cytoplasmic-facing. The region spanning 118-325 (QWVHQVKTPL…SVRFSFLTKM (208 aa)) is the Histidine kinase domain. The residue at position 121 (His121) is a Phosphohistidine; by autocatalysis.

The protein resides in the cell membrane. It catalyses the reaction ATP + protein L-histidine = ADP + protein N-phospho-L-histidine.. In terms of biological role, probable member of the two-component regulatory system YxdK/YxdJ. May activate YxdJ in response to the antibacterial protein LL-37. The sequence is that of Sensor histidine kinase YxdK (yxdK) from Bacillus subtilis (strain 168).